The chain runs to 662 residues: Sporulation protein RMD8 (662 aa).

Disordered stretches follow at residues 1–136 (MSYK…RTSK), 286–320 (YELE…SFNP), and 346–406 (LKKE…QNDF). Position 2 is an N-acetylserine (S2). The span at 99 to 121 (SARREERLSSSSSDRPRQYERLS) shows a compositional bias: basic and acidic residues. Positions 286–304 (YELETSGNNNNANQDTTTV) are enriched in polar residues. Over residues 383-395 (SSRSPASPSSIST) the composition is skewed to low complexity. Residues 630–647 (VTWWFILVILFGVIFSLT) traverse the membrane as a helical segment.

It belongs to the RMD1/sif2 family.

Its subcellular location is the membrane. Functionally, required for sporulation. This is Sporulation protein RMD8 (RMD8) from Saccharomyces cerevisiae (strain ATCC 204508 / S288c) (Baker's yeast).